The chain runs to 343 residues: General transcription and DNA repair factor IIH subunit TFB6 (343 aa).

Tyr-69 bears the Phosphotyrosine mark. A phosphothreonine mark is found at Thr-71 and Thr-84. Residues Ser-104, Ser-105, Ser-108, and Ser-342 each carry the phosphoserine modification.

In terms of assembly, component of the general transcription factor TFIIH, composed of a 7-subunit TFIIH core complex composed of XPB/SSL2, XPD/RAD3, SSL1, TFB1, TFB2, TFB4 and TFB5 which is active in NER; the 3-subunit CTD-kinase module TFIIK composed of CCL1, KIN28, and TFB3 which is active in transcription; as well as TFB6 that regulates SSL2 association with the complex. Phosphorylation leads the dissociation of from SSL2.

The protein resides in the cytoplasm. The protein localises to the nucleus. Functionally, component of the general transcription and DNA repair factor IIH (TFIIH) core complex, which is involved in general and transcription-coupled nucleotide excision repair (NER) of damaged DNA and, when complexed to TFIIK, in RNA transcription by RNA polymerase II. In NER, TFIIH acts by opening DNA around the lesion to allow the excision of the damaged oligonucleotide and its replacement by a new DNA fragment. In transcription, TFIIH has an essential role in transcription initiation. When the pre-initiation complex (PIC) has been established, TFIIH is required for promoter opening and promoter escape. Phosphorylation of the C-terminal tail (CTD) of the largest subunit of RNA polymerase II by the kinase module TFIIK controls the initiation of transcription. TFB6 facilitates dissociation of the SSL2 helicase from TFIIH after transcription initiation. The polypeptide is General transcription and DNA repair factor IIH subunit TFB6 (Saccharomyces cerevisiae (strain ATCC 204508 / S288c) (Baker's yeast)).